Here is a 314-residue protein sequence, read N- to C-terminus: Small ribosomal subunit protein uS11m (314 aa).

The N-terminal 37 residues, 1–37 (MNGVSRHLRASSLLSLIRSYGGINSVCRFSSQSDGFS), are a transit peptide targeting the mitochondrion. The disordered stretch occupies residues 34 to 138 (DGFSGGRFRE…GSGFSAPSLS (105 aa)). A compositionally biased stretch (polar residues) spans 50 to 63 (ESANNSGLSNTGRI). The segment covering 103–114 (SSLRSRLPNSLP) has biased composition (low complexity).

The protein belongs to the universal ribosomal protein uS11 family. Component of the mitochondrial ribosome small subunit (28S) which comprises a 12S rRNA and about 30 distinct proteins.

It is found in the mitochondrion. Functionally, required for karyogamy during female gametophyte development, when the two polar nuclei fuse to form the diploid central cell nucleus. The chain is Small ribosomal subunit protein uS11m from Arabidopsis thaliana (Mouse-ear cress).